Consider the following 2813-residue polypeptide: von Willebrand factor (2813 aa).

An N-terminal signal peptide occupies residues 1–22 (MSPTRLVRVLLALALILPGKLC). Positions 23–763 (TKGTVGRSSM…SSPRSHRSKR (741 aa)) are excised as a propeptide. In terms of domain architecture, VWFD 1 spans 33 to 201 (ARCSLFGGDF…ALSSGEQRCK (169 aa)). 2 cysteine pairs are disulfide-bonded: Cys35–Cys162 and Cys57–Cys200. N-linked (GlcNAc...) asparagine glycans are attached at residues Asn99, Asn156, and Asn211. The region spanning 295–348 (CPAGMEYKECVSPCTRTCQSLHVKEVCQEQCVDGCSCPEGQLLDEGHCVGSAEC) is the TIL 1 domain. The VWFD 2 domain occupies 386–560 (GECLVTGQSH…NAWKLLGACE (175 aa)). Disulfide bonds link Cys388/Cys524, Cys410/Cys559, and Cys432/Cys440. The Cell attachment site signature appears at 531–533 (RGD). TIL domains are found at residues 652-707 (CPQG…KAQC) and 776-827 (CPAD…LERC). Asn666 carries N-linked (GlcNAc...) asparagine glycosylation. Residues 698–700 (RGD) carry the Cell attachment site motif. The interval 764–787 (SLSCRPPMVKLVCPADNPRAEGLE) is amino-terminal. Cystine bridges form between Cys767–Cys808, Cys776–Cys804, and Cys810–Cys821. The tract at residues 788 to 833 (CAKTCQNYDLQCMSTGCVSGCLCPQGMVRHENRCVALERCPCFHQG) is E1. The tract at residues 826–853 (RCPCFHQGQEYAPGETVKIDCNTCVCRD) is CX. The N-linked (GlcNAc...) asparagine glycan is linked to Asn857. Positions 865–1032 (ATCSAIGMAH…NSWKVNPQCA (168 aa)) constitute a VWFD 3 domain. Cystine bridges form between Cys867–Cys996, Cys889–Cys1031, Cys898–Cys993, Cys914–Cys921, Cys1060–Cys1084, Cys1071–Cys1111, Cys1089–Cys1091, Cys1126–Cys1130, Cys1149–Cys1169, Cys1153–Cys1165, and Cys1196–Cys1199. One can recognise a TIL 4 domain in the interval 1146–1196 (YNSCAPACPITCQHPEPLACPVQCVEGCHAHCPPGKILDELLQTCIDPEDC). Residue Asn1231 is glycosylated (N-linked (GlcNAc...) asparagine). Intrachain disulfides connect Cys1234/Cys1237 and Cys1272/Cys1458. 2 VWFA domains span residues 1277–1453 (DLVF…RDEI) and 1498–1665 (DVVF…PDLV). Residues Asn1515 and Asn1574 are each glycosylated (N-linked (GlcNAc...) asparagine). Intrachain disulfides connect Cys1669/Cys1670, Cys1686/Cys1872, Cys1879/Cys1904, Cys1899/Cys1940, Cys1927/Cys2088, Cys1950/Cys2085, Cys1972/Cys2123, and Cys1993/Cys2001. The region spanning 1691–1871 (DVVLLLDGSS…TLGNSFFHKL (181 aa)) is the VWFA 3 domain. The region spanning 1948–2124 (CVCMGSSTRH…TVQQLGKTCQ (177 aa)) is the VWFD 4 domain. The E2 stretch occupies residues 2216 to 2261 (CPRLCEGNTSSCGDQPSEGCFCPPNQVMLEGSCVPEEACTQCISED). Residues Asn2223, Asn2290, Asn2357, and Asn2400 are each glycosylated (N-linked (GlcNAc...) asparagine). Residues 2255–2328 (TQCISEDGVR…CCPEYECVCD (74 aa)) enclose the VWFC 1 domain. A VWFC 2 domain is found at 2429–2495 (KVCVHRGTIY…HEGECCGRCL (67 aa)). The Cell attachment site signature appears at 2507–2509 (RGD). Residues Asn2546 and Asn2585 are each glycosylated (N-linked (GlcNAc...) asparagine). Residues 2580-2645 (EACLLNGTII…NQGECCGRCL (66 aa)) enclose the VWFC 3 domain. Disulfide bonds link Cys2724–Cys2774, Cys2739–Cys2788, Cys2750–Cys2804, and Cys2754–Cys2806. One can recognise a CTCK domain in the interval 2724–2812 (CKDIIAKLQR…QCRCSPRKCS (89 aa)). Asn2790 is a glycosylation site (N-linked (GlcNAc...) asparagine).

Multimeric. Interacts with F8. All cysteine residues are involved in intrachain or interchain disulfide bonds. In terms of processing, N- and O-glycosylated. In terms of tissue distribution, plasma.

The protein localises to the secreted. It localises to the extracellular space. Its subcellular location is the extracellular matrix. In terms of biological role, important in the maintenance of hemostasis, it promotes adhesion of platelets to the sites of vascular injury by forming a molecular bridge between sub-endothelial collagen matrix and platelet-surface receptor complex, glycoprotein Ibalpha/IX/V. Also acts as a chaperone for coagulation factor VIII, delivering it to the site of injury, stabilizing its heterodimeric structure and protecting it from premature clearance from plasma. This chain is von Willebrand factor (VWF), found in Canis lupus familiaris (Dog).